A 426-amino-acid chain; its full sequence is Gamma-glutamyl phosphate reductase (426 aa).

Belongs to the gamma-glutamyl phosphate reductase family.

The protein resides in the cytoplasm. It carries out the reaction L-glutamate 5-semialdehyde + phosphate + NADP(+) = L-glutamyl 5-phosphate + NADPH + H(+). Its pathway is amino-acid biosynthesis; L-proline biosynthesis; L-glutamate 5-semialdehyde from L-glutamate: step 2/2. Its function is as follows. Catalyzes the NADPH-dependent reduction of L-glutamate 5-phosphate into L-glutamate 5-semialdehyde and phosphate. The product spontaneously undergoes cyclization to form 1-pyrroline-5-carboxylate. This Cupriavidus necator (strain ATCC 17699 / DSM 428 / KCTC 22496 / NCIMB 10442 / H16 / Stanier 337) (Ralstonia eutropha) protein is Gamma-glutamyl phosphate reductase.